The primary structure comprises 310 residues: Methionyl-tRNA formyltransferase (310 aa).

109–112 is a (6S)-5,6,7,8-tetrahydrofolate binding site; it reads SLLP. The disordered stretch occupies residues 283 to 310; the sequence is QPQGKKAMPAADWARGARIGDGERFGDD. A compositionally biased stretch (basic and acidic residues) spans 300–310; it reads RIGDGERFGDD.

It belongs to the Fmt family.

The catalysed reaction is L-methionyl-tRNA(fMet) + (6R)-10-formyltetrahydrofolate = N-formyl-L-methionyl-tRNA(fMet) + (6S)-5,6,7,8-tetrahydrofolate + H(+). Its function is as follows. Attaches a formyl group to the free amino group of methionyl-tRNA(fMet). The formyl group appears to play a dual role in the initiator identity of N-formylmethionyl-tRNA by promoting its recognition by IF2 and preventing the misappropriation of this tRNA by the elongation apparatus. This chain is Methionyl-tRNA formyltransferase, found in Thermobifida fusca (strain YX).